We begin with the raw amino-acid sequence, 357 residues long: UDP-N-acetylglucosamine--N-acetylmuramyl-(pentapeptide) pyrophosphoryl-undecaprenol N-acetylglucosamine transferase (357 aa).

UDP-N-acetyl-alpha-D-glucosamine-binding positions include Thr-13 to Gly-15, Asn-125, Arg-161, Ser-189, Ile-243, and Gln-288.

This sequence belongs to the glycosyltransferase 28 family. MurG subfamily.

It localises to the cell inner membrane. It carries out the reaction di-trans,octa-cis-undecaprenyl diphospho-N-acetyl-alpha-D-muramoyl-L-alanyl-D-glutamyl-meso-2,6-diaminopimeloyl-D-alanyl-D-alanine + UDP-N-acetyl-alpha-D-glucosamine = di-trans,octa-cis-undecaprenyl diphospho-[N-acetyl-alpha-D-glucosaminyl-(1-&gt;4)]-N-acetyl-alpha-D-muramoyl-L-alanyl-D-glutamyl-meso-2,6-diaminopimeloyl-D-alanyl-D-alanine + UDP + H(+). Its pathway is cell wall biogenesis; peptidoglycan biosynthesis. Its function is as follows. Cell wall formation. Catalyzes the transfer of a GlcNAc subunit on undecaprenyl-pyrophosphoryl-MurNAc-pentapeptide (lipid intermediate I) to form undecaprenyl-pyrophosphoryl-MurNAc-(pentapeptide)GlcNAc (lipid intermediate II). The sequence is that of UDP-N-acetylglucosamine--N-acetylmuramyl-(pentapeptide) pyrophosphoryl-undecaprenol N-acetylglucosamine transferase from Bordetella parapertussis (strain 12822 / ATCC BAA-587 / NCTC 13253).